The following is a 156-amino-acid chain: Large ribosomal subunit protein uL22 (156 aa).

Belongs to the universal ribosomal protein uL22 family. Part of the 50S ribosomal subunit.

Its function is as follows. This protein binds specifically to 23S rRNA. It makes multiple contacts with different domains of the 23S rRNA in the assembled 50S subunit and ribosome. The globular domain of the protein is located near the polypeptide exit tunnel on the outside of the subunit, while an extended beta-hairpin is found that lines the wall of the exit tunnel in the center of the 70S ribosome. The protein is Large ribosomal subunit protein uL22 of Methanocaldococcus jannaschii (strain ATCC 43067 / DSM 2661 / JAL-1 / JCM 10045 / NBRC 100440) (Methanococcus jannaschii).